A 565-amino-acid polypeptide reads, in one-letter code: Dihydroxy-acid dehydratase (565 aa).

Cys50 provides a ligand contact to [2Fe-2S] cluster. A Mg(2+)-binding site is contributed by Asp82. Cys123 is a binding site for [2Fe-2S] cluster. Mg(2+)-binding residues include Asp124 and Lys125. The residue at position 125 (Lys125) is an N6-carboxylysine. Residue Cys195 coordinates [2Fe-2S] cluster. Mg(2+) is bound at residue Glu447. Catalysis depends on Ser473, which acts as the Proton acceptor.

The protein belongs to the IlvD/Edd family. Homodimer. The cofactor is [2Fe-2S] cluster. It depends on Mg(2+) as a cofactor.

It carries out the reaction (2R)-2,3-dihydroxy-3-methylbutanoate = 3-methyl-2-oxobutanoate + H2O. It catalyses the reaction (2R,3R)-2,3-dihydroxy-3-methylpentanoate = (S)-3-methyl-2-oxopentanoate + H2O. The protein operates within amino-acid biosynthesis; L-isoleucine biosynthesis; L-isoleucine from 2-oxobutanoate: step 3/4. It participates in amino-acid biosynthesis; L-valine biosynthesis; L-valine from pyruvate: step 3/4. Functions in the biosynthesis of branched-chain amino acids. Catalyzes the dehydration of (2R,3R)-2,3-dihydroxy-3-methylpentanoate (2,3-dihydroxy-3-methylvalerate) into 2-oxo-3-methylpentanoate (2-oxo-3-methylvalerate) and of (2R)-2,3-dihydroxy-3-methylbutanoate (2,3-dihydroxyisovalerate) into 2-oxo-3-methylbutanoate (2-oxoisovalerate), the penultimate precursor to L-isoleucine and L-valine, respectively. The chain is Dihydroxy-acid dehydratase from Halorhodospira halophila (strain DSM 244 / SL1) (Ectothiorhodospira halophila (strain DSM 244 / SL1)).